The chain runs to 261 residues: MQKLALGIEYDGSWYCGWQRQRDAPSIQSYIENAIKKITSESVTVFCAGRTDSGVHALGQVVHFETYSRRSKSAWTLGMNRYLPSSICVRWARLVNKDFHARFSAISRRYCYIINNNCIRSALLFRKTWHYKKYLDINKMCDAAQYLLGENDFSSFRAAGCQSYSARRKLYHIRIIRKGQCIVIDIKANSFMYRMVRNIVGSLVKVGCGEQPEKWIAELLENCNRSLAGVTAPASGLYLVEVKYPSDFSIPSSFIEELWCA.

Catalysis depends on Asp52, which acts as the Nucleophile. Tyr110 lines the substrate pocket.

The protein belongs to the tRNA pseudouridine synthase TruA family. As to quaternary structure, homodimer.

It catalyses the reaction uridine(38/39/40) in tRNA = pseudouridine(38/39/40) in tRNA. Functionally, formation of pseudouridine at positions 38, 39 and 40 in the anticodon stem and loop of transfer RNAs. The sequence is that of tRNA pseudouridine synthase A from Blochmanniella pennsylvanica (strain BPEN).